An 806-amino-acid chain; its full sequence is Leucine--tRNA ligase (806 aa).

Residues 40–51 (PYPSGKGLHVGH) carry the 'HIGH' region motif. The 'KMSKS' region motif lies at 580-584 (KMSKS). K583 is a binding site for ATP.

This sequence belongs to the class-I aminoacyl-tRNA synthetase family.

The protein resides in the cytoplasm. The catalysed reaction is tRNA(Leu) + L-leucine + ATP = L-leucyl-tRNA(Leu) + AMP + diphosphate. The polypeptide is Leucine--tRNA ligase (Ureaplasma urealyticum serovar 10 (strain ATCC 33699 / Western)).